The sequence spans 270 residues: Homeobox protein vent1B (270 aa).

Basic and acidic residues-rich tracts occupy residues 17–26 (EEAADGKDSM) and 44–59 (YAKE…DVQE). 2 disordered regions span residues 17–66 (EEAA…SFQC) and 88–134 (TWGS…LRTA). The segment covering 89–99 (WGSSDEFSSAG) has biased composition (polar residues). Positions 116-131 (QDTDHNGKSTKSDRRL) are enriched in basic and acidic residues. Positions 128 to 187 (DRRLRTAFSPQQISKLEQAFNKQRYLGASERKKLATSLMLSEIQVKTWFQNRRMKLKRQI) form a DNA-binding region, homeobox.

As to expression, expressed in the ventral marginal zone of gastrulae. At the end of gastrulation, predominantly localized to the ventral region of the closing slit blastopore. At early tail bud stage, expression is maintained only in the forming proctodeum.

It localises to the nucleus. In terms of biological role, probable transcription regulator. Acts in a ventral signaling pathway downstream of bmp4 and vent2B. This is Homeobox protein vent1B (vent1B) from Xenopus laevis (African clawed frog).